Consider the following 412-residue polypeptide: Imidazolonepropionase (412 aa).

Residues His-76 and His-78 each coordinate Fe(3+). His-76 and His-78 together coordinate Zn(2+). Residues Arg-85, Tyr-148, and His-181 each coordinate 4-imidazolone-5-propanoate. Tyr-148 contributes to the N-formimidoyl-L-glutamate binding site. Residue His-242 participates in Fe(3+) binding. Position 242 (His-242) interacts with Zn(2+). Glu-245 lines the 4-imidazolone-5-propanoate pocket. Residue Asp-317 coordinates Fe(3+). Zn(2+) is bound at residue Asp-317. N-formimidoyl-L-glutamate is bound by residues Asn-319 and Gly-321. Ser-322 lines the 4-imidazolone-5-propanoate pocket.

The protein belongs to the metallo-dependent hydrolases superfamily. HutI family. It depends on Zn(2+) as a cofactor. The cofactor is Fe(3+).

The protein localises to the cytoplasm. The enzyme catalyses 4-imidazolone-5-propanoate + H2O = N-formimidoyl-L-glutamate. It participates in amino-acid degradation; L-histidine degradation into L-glutamate; N-formimidoyl-L-glutamate from L-histidine: step 3/3. In terms of biological role, catalyzes the hydrolytic cleavage of the carbon-nitrogen bond in imidazolone-5-propanoate to yield N-formimidoyl-L-glutamate. It is the third step in the universal histidine degradation pathway. The sequence is that of Imidazolonepropionase from Staphylococcus aureus (strain USA300 / TCH1516).